The following is a 164-amino-acid chain: Peptidyl-prolyl cis-trans isomerase A (164 aa).

Met-1 is modified (N-acetylmethionine). Val-2 is subject to N-acetylvaline; in Peptidyl-prolyl cis-trans isomerase A, N-terminally processed. Positions 7–163 constitute a PPIase cyclophilin-type domain; the sequence is FFDITADGEP…KKITISDCGQ (157 aa). Lys-28 is modified (N6-acetyllysine; alternate). A Glycyl lysine isopeptide (Lys-Gly) (interchain with G-Cter in SUMO2); alternate cross-link involves residue Lys-28. Lys-28 participates in a covalent cross-link: Glycyl lysine isopeptide (Lys-Gly) (interchain with G-Cter in ubiquitin); alternate. 2 positions are modified to N6-acetyllysine: Lys-44 and Lys-76. A Phosphoserine modification is found at Ser-77. The residue at position 82 (Lys-82) is an N6-acetyllysine; alternate. Lys-82 is covalently cross-linked (Glycyl lysine isopeptide (Lys-Gly) (interchain with G-Cter in SUMO2); alternate). The residue at position 93 (Thr-93) is a Phosphothreonine. A glycan (N-linked (GlcNAc...) asparagine) is linked at Asn-108. N6-acetyllysine is present on residues Lys-125, Lys-131, and Lys-133.

The protein belongs to the cyclophilin-type PPIase family. PPIase A subfamily. In terms of assembly, interacts with protein phosphatase PPP3CA/calcineurin A. Interacts with isoform 2 of BSG/CD147. Interacts with FOXO1; the interaction promotes FOXO1 dephosphorylation, nuclear accumulation and transcriptional activity. Interacts with integrin ITGA2B:ITGB3; the interaction is ROS and peptidyl-prolyl cis-trans isomerase (PPIase) activity-dependent and is increased in the presence of thrombin. Interacts with MAP3K5. Interacts with TARDBP; the interaction is dependent on the RNA-binding activity of TARDBP and the PPIase activity of PPIA/CYPA and the acetylation of PPIA/CYPA at Lys-125 favors the interaction. Interacts with HNRNPA1, HNRNPA2B1, HNRNPC, RBMX, HNRNPK and HNRNPM. Post-translationally, acetylation at Lys-125 markedly inhibits catalysis of cis to trans isomerization. PPIA acetylation also antagonizes the immunosuppressive effects of cyclosporine by inhibiting the sequential steps of cyclosporine binding and calcineurin inhibition. Acetylation at Lys-125 favors the interaction with TARDBP.

It localises to the cytoplasm. It is found in the secreted. Its subcellular location is the nucleus. It carries out the reaction [protein]-peptidylproline (omega=180) = [protein]-peptidylproline (omega=0). Its activity is regulated as follows. Binds cyclosporin A (CsA). CsA mediates some of its effects via an inhibitory action on PPIase. Functionally, catalyzes the cis-trans isomerization of proline imidic peptide bonds in oligopeptides. Exerts a strong chemotactic effect on leukocytes partly through activation of one of its membrane receptors BSG/CD147, initiating a signaling cascade that culminates in MAPK/ERK activation. Activates endothelial cells (ECs) in a proinflammatory manner by stimulating activation of NF-kappa-B and ERK, JNK and p38 MAP-kinases and by inducing expression of adhesion molecules including SELE and VCAM1. Induces apoptosis in ECs by promoting the FOXO1-dependent expression of CCL2 and BCL2L11 which are involved in EC chemotaxis and apoptosis. In response to oxidative stress, initiates proapoptotic and antiapoptotic signaling in ECs via activation of NF-kappa-B and AKT1 and up-regulation of antiapoptotic protein BCL2. Negatively regulates MAP3K5/ASK1 kinase activity, autophosphorylation and oxidative stress-induced apoptosis mediated by MAP3K5/ASK1. Necessary for the assembly of TARDBP in heterogeneous nuclear ribonucleoprotein (hnRNP) complexes and regulates TARDBP binding to RNA UG repeats and TARDBP-dependent expression of HDAC6, ATG7 and VCP which are involved in clearance of protein aggregates. Plays an important role in platelet activation and aggregation. Regulates calcium mobilization and integrin ITGA2B:ITGB3 bidirectional signaling via increased ROS production as well as by facilitating the interaction between integrin and the cell cytoskeleton. Binds heparan sulfate glycosaminoglycans. The polypeptide is Peptidyl-prolyl cis-trans isomerase A (Ppia) (Rattus norvegicus (Rat)).